A 289-amino-acid chain; its full sequence is Homeobox protein Nkx-2.6 (289 aa).

Disordered stretches follow at residues 75–125 (GSNP…PQRK) and 259–289 (TPLA…VTAW). The homeobox DNA-binding region spans 123–182 (QRKSRVLFSQAQVLALERRFKQQRYLTAPEREHLASALQLTSTQVKIWFQNRRYKSKSQR). Polar residues predominate over residues 261–274 (LASSGFSPGGQSAA).

This sequence belongs to the NK-2 homeobox family. As to expression, not detected in any neonate or adult tissues.

It is found in the nucleus. Acts as a transcriptional activator. In conjunction with NKX2-5, may play a role in both pharyngeal and cardiac embryonic development. The protein is Homeobox protein Nkx-2.6 (Nkx2-6) of Mus musculus (Mouse).